A 480-amino-acid chain; its full sequence is MAAVWRRSARLFILLQRHHSCTFTSQNLNHFMRSQKVMTDQSQTDLGLFKPPSTVRGMTELDRSAFNQTVSVPAIRLPTNILNKAVKSLKKVALQRPGLKRVVEEHSEDGNADCGNIEHRLLLLDPNSITSSDSFGSDEAEALKAYSVPQEIQSYELKLTYENFKSEEILRAVLPEGQGVTSGFSRVGHIAHMNLREHQLPYRKLIGQVIIDKNPGITCVVNKTNTIDSTYRNFQMEVLAGESNMVAKVRENGVLYEFDFSRVYWNPRLSTEHERIVSLLHRGDTVVDVFAGVGPFAIPAARRGCAVLANDLNPESFRWLQHNAKLNKVDQKITTSNLDGRDFIRGPVRERLPALMKGSQKIHVVMNLPALALEFLDAFKGLLDPEPDQSLSNLPQVHCYGFSKENDPQRDVVERAEASLKTNLQGQCSVHLVRNVAPNKEMMCVSFTLPRGVLYKTHTQDRDTSEEPCPKKQKCEDSTN.

Residues 1–18 constitute a mitochondrion transit peptide; the sequence is MAAVWRRSARLFILLQRH. S-adenosyl-L-methionine is bound by residues His273, 311–312, 339–340, and Asn367; these read DL and DG. The tract at residues 458-480 is disordered; the sequence is HTQDRDTSEEPCPKKQKCEDSTN.

Belongs to the class I-like SAM-binding methyltransferase superfamily. TRM5/TYW2 family. As to quaternary structure, monomer.

The protein resides in the mitochondrion matrix. Its subcellular location is the nucleus. The protein localises to the cytoplasm. The catalysed reaction is guanosine(37) in tRNA + S-adenosyl-L-methionine = N(1)-methylguanosine(37) in tRNA + S-adenosyl-L-homocysteine + H(+). Functionally, involved in mitochondrial tRNA methylation. Specifically methylates the N1 position of guanosine-37 in various tRNAs. Methylation is not dependent on the nature of the nucleoside 5' of the target nucleoside. This is the first step in the biosynthesis of wybutosine (yW), a modified base adjacent to the anticodon of tRNAs and required for accurate decoding. This Danio rerio (Zebrafish) protein is tRNA (guanine(37)-N(1))-methyltransferase (trmt5).